Consider the following 336-residue polypeptide: Fructose-1,6-bisphosphatase class 1 (336 aa).

Mg(2+) contacts are provided by Glu92, Asp115, Leu117, and Asp118. Substrate contacts are provided by residues 118–121 (DGSS), Asn211, Tyr244, 262–264 (YLY), and Lys274. Glu280 lines the Mg(2+) pocket.

It belongs to the FBPase class 1 family. In terms of assembly, homotetramer. The cofactor is Mg(2+).

It is found in the cytoplasm. The enzyme catalyses beta-D-fructose 1,6-bisphosphate + H2O = beta-D-fructose 6-phosphate + phosphate. It functions in the pathway carbohydrate biosynthesis; gluconeogenesis. In Vibrio cholerae serotype O1 (strain ATCC 39541 / Classical Ogawa 395 / O395), this protein is Fructose-1,6-bisphosphatase class 1.